We begin with the raw amino-acid sequence, 606 residues long: MADPKGSTSKEGLGDWCILEADCSDLENDFEQLFEQDADSDVSDLLDNGELEQGNSLELFHQQECKQSEEQLQILKRKYLSPKAVAQLSPRLELMSLSPQQKSKRRLFAEQDSGLELSLNNEAEDNAPEVEVPALDSGPVDEGGTGDVDIDYLALLRSSNRKATLMAKFKDAFGVGFNELTRQFKSYKTCCNHRVLAVYAVHDDLFESSKQLLQQHCDYIWVRGIAAMTLYLLCFKAGKNRGTVHKLLTSMLNVQEQQILSEPPKLRNTAAALFWYKGGMGSGAFTYGKYPDWIAQQTVLGHQNAEASTFDFSVMVQWAFDNNHVDEADIAYQYARLAPEDSNAVAWLAHNSQAKFVRDCAAMVRFYKNLQMREMSMSEWIYTRINEVEGEGHWSSIVKFLGYQGVNFIMFLAALKNFLHAVPKQNCILIHGPPNSGKSSFAMSLIKVLKGRVLSFVNSRSQFWLQPLGECKIALIDDVTDPCWLYMDTYLRNGLDGHFVSLDCKYKAPVQTKFLPLLLTSNINVHEETNYRYLHSRIKGFEFPNPFPMKSDNTPQFELTDQSWKSFFERLWTQLELSDQEEEEEGEHGETQRAFQCSARSANEHI.

The short motif at 76–78 (KRK) is the Nuclear localization signal element. Residues S81 and S89 each carry the phosphoserine; by host modification. The interval 144-307 (GTGDVDIDYL…TVLGHQNAEA (164 aa)) is DNA-binding region. The 151-residue stretch at 406-556 (VNFIMFLAAL…FPMKSDNTPQ (151 aa)) folds into the SF3 helicase domain. Residue 432–439 (GPPNSGKS) participates in ATP binding. K513 participates in a covalent cross-link: Glycyl lysine isopeptide (Lys-Gly) (interchain with G-Cter in SUMO). The tract at residues 581 to 606 (EEEEEGEHGETQRAFQCSARSANEHI) is disordered. Residues 593–606 (RAFQCSARSANEHI) show a composition bias toward polar residues.

Belongs to the papillomaviridae E1 protein family. Can form hexamers. Interacts with E2 protein; this interaction increases E1 DNA binding specificity. Interacts with host DNA polymerase subunit POLA2. Interacts with host single stranded DNA-binding protein RPA1. Interacts with host TOP1; this interaction stimulates the enzymatic activity of TOP1. Phosphorylated. In terms of processing, sumoylated.

Its subcellular location is the host nucleus. The enzyme catalyses Couples ATP hydrolysis with the unwinding of duplex DNA by translocating in the 3'-5' direction.. It carries out the reaction ATP + H2O = ADP + phosphate + H(+). Its function is as follows. ATP-dependent DNA 3'-5' helicase required for initiation of viral DNA replication. It forms a complex with the viral E2 protein. The E1-E2 complex binds to the replication origin which contains binding sites for both proteins. During the initial step, a dimer of E1 interacts with a dimer of protein E2 leading to a complex that binds the viral origin of replication with high specificity. Then, a second dimer of E1 displaces the E2 dimer in an ATP-dependent manner to form the E1 tetramer. Following this, two E1 monomers are added to each half of the site, which results in the formation of two E1 trimers on the viral ori. Subsequently, two hexamers will be created. The double hexamer acts as a bi-directional helicase machinery and unwinds the viral DNA and then recruits the host DNA polymerase to start replication. The sequence is that of Replication protein E1 from Human papillomavirus type RTRX7.